The sequence spans 402 residues: Putative RNA-guided DNA endonuclease InsQ (402 aa).

Catalysis depends on residues D183 and E267. Zn(2+)-binding residues include C334, C337, C353, and C356. D363 is a catalytic residue.

This sequence in the N-terminal section; belongs to the transposase 2 family. In the C-terminal section; belongs to the transposase 35 family.

Functionally, an RNA-guided dsDNA endonuclease. When guided by an RNA derived from the right-end element of its insertion sequence element (IS), cleaves DNA downstream of the transposon-associated motif (TAM). Cleaves supercoiled and linear DNA in a staggered manner 15-21 bases from the TAM yielding 5'-overhangs. Binds reRNA, an approximately 150 nucleotide base sRNA derived from the 3' end of its own gene, the right end (RE) of the insertion sequence (IS) plus sequence downstream of the IS. Not required for transposition of the insertion element. The corresponding transposase in strains MG1655 and W3110 is a truncated pseudogene (yncK). The sequence is that of Putative RNA-guided DNA endonuclease InsQ (insQ) from Escherichia coli (strain K12).